The chain runs to 823 residues: Ankyrin repeat domain-containing protein 20B (823 aa).

ANK repeat units follow at residues 32–65, 66–95, 99–128, 132–161, 165–194, and 198–227; these read SELQ…ARDK, QHRT…QIDI, ENRT…NPNL, YGNT…HIEA, DSNT…STHA, and LRRS…DVFA. Disordered stretches follow at residues 302–343 and 355–401; these read PEKV…GVED and VQTL…QLSE. Positions 372–382 are enriched in basic and acidic residues; that stretch reads QERHERSEKKQ. Coiled coils occupy residues 431–480, 565–724, and 776–805; these read KKLK…KQLE, EMIT…NNST, and LVLE…EKAE.

The protein is Ankyrin repeat domain-containing protein 20B (ANKRD20A8P) of Homo sapiens (Human).